Consider the following 1194-residue polypeptide: F-box only protein 38 (1194 aa).

One can recognise an F-box domain in the interval M30–D75. Positions K59–R119 are interaction with KLF7. 3 consecutive short sequence motifs (nuclear export signal) follow at residues L194–V201, L307–I316, and L451–L460. Disordered regions lie at residues A487–D529, E577–S776, R793–S879, and K896–D915. A compositionally biased stretch (low complexity) spans N493–H510. A Phosphothreonine modification is found at T592. Residues S599, S601, and S607 each carry the phosphoserine modification. The span at S599–E609 shows a compositional bias: acidic residues. Basic and acidic residues-rich tracts occupy residues R622–G631 and I683–D701. Residues S705–S728 show a composition bias toward low complexity. S742 and S746 each carry phosphoserine. The span at E764–A774 shows a compositional bias: acidic residues. Positions R793–S804 are enriched in basic and acidic residues. Over residues S855–E867 the composition is skewed to polar residues. Basic residues predominate over residues K896–T906. Positions K902 to R905 match the Nuclear localization signal motif.

Part of the SCF (SKP1-CUL1-F-box) E3 ubiquitin-protein ligase complex SCF(FBXO38) composed of CUL1, SKP1, RBX1 and FBXO38. Interacts with KLF7. Interacts with PDCD1/PD-1. In terms of tissue distribution, expressed at high levels in embryo (developing brain, spinal cord, branchial arms and limbs). Widely expressed at low levels in adult tissues, with highest expression in testis. Expressed in postmeiotic spermatids.

It is found in the cytoplasm. The protein localises to the cytosol. Its subcellular location is the nucleus. Its pathway is protein modification; protein ubiquitination. Substrate recognition component of a SCF (SKP1-CUL1-F-box protein) E3 ubiquitin-protein ligase complex which mediates the ubiquitination and subsequent proteasomal degradation of PDCD1/PD-1, thereby regulating T-cells-mediated immunity. Required for anti-tumor activity of T-cells by promoting the degradation of PDCD1/PD-1; the PDCD1-mediated inhibitory pathway being exploited by tumors to attenuate anti-tumor immunity and facilitate tumor survival. May indirectly stimulate the activity of transcription factor KLF7, a regulator of neuronal differentiation, without promoting KLF7 ubiquitination. This chain is F-box only protein 38, found in Mus musculus (Mouse).